The chain runs to 103 residues: Large ribosomal subunit protein bL21 (103 aa).

Belongs to the bacterial ribosomal protein bL21 family. Part of the 50S ribosomal subunit. Contacts protein L20.

This protein binds to 23S rRNA in the presence of protein L20. In Marinobacter nauticus (strain ATCC 700491 / DSM 11845 / VT8) (Marinobacter aquaeolei), this protein is Large ribosomal subunit protein bL21.